The chain runs to 547 residues: MASEILLNIKEEVTCPICLELLTEPLSLDCGHSFCQACITANHKESTLHQGERSCPLCRVSYQSENLRPNRHLANIAERLREVMLSPEEGQKVDRCARHGEKLLLFCQQHGNVICWLCERSQEHRGHSTFLVEEVAQKYQEKLQVALEMMRQKQQDAEKLEADVREEQASWKIQIENDKTNILAEFKQLRDILDCEESNELQNLEKEEENLLKTLAQSENDMVLQTQSMRVLIADLEHRLQGSVMELLQDVEGVIKRIKNVTLQKPKTFLNEKRRVFRAPDLKGMLQVFKELKEVQCYWAHVTLVPSHPSCTVISEDERQVRYQEQIHQPSVKVKYFCGVLGSPGFTSGKHYWEVDVSDKSAWILGVCVSLKCTANVPGIENYQPKNGYWVIGLQNANNYSAFQDAVPGTENYQPKNGNRRNKGLRNADNYSAFRDTFQPINDSWVTGLRNVDNYNAFQDAVKYSDFQDGSCSTPSAPLMVPLFMTICPKRVGVFLDCKACTVSFFNVTSNGCLIYKFSKCHFSYPVFPYFSPMICKLPMTLCSPSS.

Ala2 carries the post-translational modification N-acetylalanine. The segment at 15–59 (CPICLELLTEPLSLDCGHSFCQACITANHKESTLHQGERSCPLCR) adopts an RING-type zinc-finger fold. Ser86 carries the phosphoserine modification. A B box-type zinc finger spans residues 91–132 (QKVDRCARHGEKLLLFCQQHGNVICWLCERSQEHRGHSTFLV). Zn(2+) contacts are provided by Cys96, His99, Cys118, and His124. The stretch at 132–225 (VEEVAQKYQE…AQSENDMVLQ (94 aa)) forms a coiled coil. Positions 186-199 (FKQLRDILDCEESN) are required for interaction with GABARAP and for autophagy. The 268-residue stretch at 280–547 (PDLKGMLQVF…LPMTLCSPSS (268 aa)) folds into the B30.2/SPRY domain.

It belongs to the TRIM/RBCC family. Can form homodimers and homotrimers. In addition to lower-order dimerization, also exhibits a higher-order multimerization and both low- and high-order multimerizations are essential for its restriction activity. Interacts with BTBD1 and BTBD2. Interacts with PSMC4, PSMC5, PSMD7 and HSPA8/HSC70. Interacts (via B30.2/SPRY domain) with HSPA1A/B. Interacts with PSMC2, MAP3K7/TAK1, TAB2 and TAB3. Interacts with SQSTM1. Interacts with TRIM6 and TRIM34. Interacts with ULK1 (phosphorylated form), GABARAP, GABARAPL1, GABARAPL2, MAP1LC3A, MAP1LC3C and BECN1. Degraded in a proteasome-independent fashion in the absence of viral infection but in a proteasome-dependent fashion following exposure to restriction sensitive virus. In terms of processing, autoubiquitinated in a RING finger- and UBE2D2-dependent manner. Monoubiquitinated by TRIM21. Deubiquitinated by Yersinia YopJ. Ubiquitination may not lead to proteasomal degradation.

Its subcellular location is the cytoplasm. It is found in the nucleus. It carries out the reaction S-ubiquitinyl-[E2 ubiquitin-conjugating enzyme]-L-cysteine + [acceptor protein]-L-lysine = [E2 ubiquitin-conjugating enzyme]-L-cysteine + N(6)-ubiquitinyl-[acceptor protein]-L-lysine.. It functions in the pathway protein modification; protein ubiquitination. Functionally, capsid-specific restriction factor that prevents infection from non-host-adapted retroviruses. Blocks viral replication early in the life cycle, after viral entry but before reverse transcription. In addition to acting as a capsid-specific restriction factor, also acts as a pattern recognition receptor that activates innate immune signaling in response to the retroviral capsid lattice. Binding to the viral capsid triggers its E3 ubiquitin ligase activity, and in concert with the heterodimeric ubiquitin conjugating enzyme complex UBE2V1-UBE2N (also known as UBC13-UEV1A complex) generates 'Lys-63'-linked polyubiquitin chains, which in turn are catalysts in the autophosphorylation of the MAP3K7/TAK1 complex (includes TAK1, TAB2, and TAB3). Activation of the MAP3K7/TAK1 complex by autophosphorylation results in the induction and expression of NF-kappa-B and MAPK-responsive inflammatory genes, thereby leading to an innate immune response in the infected cell. Plays a role in regulating autophagy through activation of autophagy regulator BECN1 by causing its dissociation from its inhibitors BCL2 and TAB2. In Ateles geoffroyi (Black-handed spider monkey), this protein is Tripartite motif-containing protein 5 (TRIM5).